The primary structure comprises 272 residues: Sulfate transporter CysZ (272 aa).

Transmembrane regions (helical) follow at residues 29-49 (FVIM…WLFI), 66-86 (WLSF…LLLF), 148-168 (IIAL…VPVL), and 219-239 (FVPV…TLMW).

Belongs to the CysZ family.

The protein resides in the cell inner membrane. In terms of biological role, high affinity, high specificity proton-dependent sulfate transporter, which mediates sulfate uptake. Provides the sulfur source for the cysteine synthesis pathway. The sequence is that of Sulfate transporter CysZ from Haemophilus influenzae (strain ATCC 51907 / DSM 11121 / KW20 / Rd).